The following is a 301-amino-acid chain: Pseudouridine-5'-phosphate glycosidase (301 aa).

Glu-23 functions as the Proton donor in the catalytic mechanism. Residues Lys-84 and Val-104 each contribute to the substrate site. Asp-136 is a Mn(2+) binding site. Residue 138–140 coordinates substrate; the sequence is SRD. Lys-157 functions as the Nucleophile in the catalytic mechanism.

Belongs to the pseudouridine-5'-phosphate glycosidase family. As to quaternary structure, homotrimer. Mn(2+) is required as a cofactor.

It catalyses the reaction D-ribose 5-phosphate + uracil = psi-UMP + H2O. Catalyzes the reversible cleavage of pseudouridine 5'-phosphate (PsiMP) to ribose 5-phosphate and uracil. Functions biologically in the cleavage direction, as part of a pseudouridine degradation pathway. The sequence is that of Pseudouridine-5'-phosphate glycosidase from Mycoplasmopsis agalactiae (strain NCTC 10123 / CIP 59.7 / PG2) (Mycoplasma agalactiae).